We begin with the raw amino-acid sequence, 354 residues long: MRVDAFDFDLPPERIALRPAEPRESARLLRVRPGAAPELEDRTIADLPDLLQPGDALVVNDTKVIPARLDGTRTRAGGSTVAIEATLIRRLSGSAWAAFAKPAKRLAVGETVVFAGASGGTLEARVLDKLESGEVHFAFALSGPELDAAIDAIGHMPLPPYIAAKRPEDDRDRTDYQPVFARVEGSVAAPTASLHFTPDLLAKIAARGVSRYTVTLHVGAGTFLPVKAEDTTDHQMHAEWGEVSPETAAELNAVKARGGRIITVGSTATRLIETAATPEGSIRPYLGETDIFITPGYAFRASDVMLTNFHLPRSTLVMLVAAFVGHETQKRAYAHAIASGYRFYSYGDACLLER.

This sequence belongs to the QueA family. Monomer.

The protein resides in the cytoplasm. The enzyme catalyses 7-aminomethyl-7-carbaguanosine(34) in tRNA + S-adenosyl-L-methionine = epoxyqueuosine(34) in tRNA + adenine + L-methionine + 2 H(+). The protein operates within tRNA modification; tRNA-queuosine biosynthesis. Functionally, transfers and isomerizes the ribose moiety from AdoMet to the 7-aminomethyl group of 7-deazaguanine (preQ1-tRNA) to give epoxyqueuosine (oQ-tRNA). The sequence is that of S-adenosylmethionine:tRNA ribosyltransferase-isomerase from Azorhizobium caulinodans (strain ATCC 43989 / DSM 5975 / JCM 20966 / LMG 6465 / NBRC 14845 / NCIMB 13405 / ORS 571).